The chain runs to 206 residues: Uridine kinase (206 aa).

9-16 (GGSGSGKT) contacts ATP.

This sequence belongs to the uridine kinase family.

The protein localises to the cytoplasm. It carries out the reaction uridine + ATP = UMP + ADP + H(+). The catalysed reaction is cytidine + ATP = CMP + ADP + H(+). Its pathway is pyrimidine metabolism; CTP biosynthesis via salvage pathway; CTP from cytidine: step 1/3. It participates in pyrimidine metabolism; UMP biosynthesis via salvage pathway; UMP from uridine: step 1/1. The sequence is that of Uridine kinase from Borrelia duttonii (strain Ly).